Consider the following 255-residue polypeptide: Methylthioribulose-1-phosphate dehydratase (255 aa).

Cysteine 98 is a substrate binding site. Histidine 116 and histidine 118 together coordinate Zn(2+). Glutamate 150 functions as the Proton donor/acceptor in the catalytic mechanism. Residue histidine 207 participates in Zn(2+) binding.

It belongs to the aldolase class II family. MtnB subfamily. Zn(2+) is required as a cofactor.

It localises to the cytoplasm. The enzyme catalyses 5-(methylsulfanyl)-D-ribulose 1-phosphate = 5-methylsulfanyl-2,3-dioxopentyl phosphate + H2O. It functions in the pathway amino-acid biosynthesis; L-methionine biosynthesis via salvage pathway; L-methionine from S-methyl-5-thio-alpha-D-ribose 1-phosphate: step 2/6. Its function is as follows. Catalyzes the dehydration of methylthioribulose-1-phosphate (MTRu-1-P) into 2,3-diketo-5-methylthiopentyl-1-phosphate (DK-MTP-1-P). This Pyricularia oryzae (strain 70-15 / ATCC MYA-4617 / FGSC 8958) (Rice blast fungus) protein is Methylthioribulose-1-phosphate dehydratase.